We begin with the raw amino-acid sequence, 272 residues long: Short-chain dehydrogenase reductase ATA1 (272 aa).

Position 14-38 (14-38 (IITGGARGIGAATARLFTENGAYVI)) interacts with NADP(+). Ser143 provides a ligand contact to substrate. The active-site Proton acceptor is the Tyr156. Residue Lys160 coordinates NADP(+).

The protein belongs to the short-chain dehydrogenases/reductases (SDR) family. In terms of tissue distribution, expressed specifically in tapetal cells.

Functionally, may play a role in tapetum development. The chain is Short-chain dehydrogenase reductase ATA1 from Arabidopsis thaliana (Mouse-ear cress).